We begin with the raw amino-acid sequence, 107 residues long: U1-lycotoxin-Ls1b (107 aa).

Positions 1–20 are cleaved as a signal peptide; sequence MMKVLVVVALLVTLISYSSS. Residues 21 to 41 constitute a propeptide that is removed on maturation; it reads EGIDDLEADELLSLMANEQTR. Cystine bridges form between Cys44-Cys59, Cys51-Cys68, Cys58-Cys86, and Cys70-Cys84.

This sequence belongs to the neurotoxin 19 (CSTX) family. 04 (U1-Lctx) subfamily. As to expression, expressed by the venom gland.

It localises to the secreted. This is U1-lycotoxin-Ls1b from Lycosa singoriensis (Wolf spider).